The primary structure comprises 503 residues: Putative cytochrome P450 71A28 (503 aa).

Residues 1-21 (MILISLCFTTFLAFLFLNPLL) traverse the membrane as a helical segment. Cys-443 is a heme binding site.

Belongs to the cytochrome P450 family. Heme serves as cofactor.

It localises to the membrane. This is Putative cytochrome P450 71A28 (CYP71A28) from Arabidopsis thaliana (Mouse-ear cress).